We begin with the raw amino-acid sequence, 338 residues long: Ferredoxin--NADP reductase (338 aa).

FAD-binding residues include D38, Q46, Y51, V91, F125, D291, and T331.

Belongs to the ferredoxin--NADP reductase type 2 family. As to quaternary structure, homodimer. Requires FAD as cofactor.

It carries out the reaction 2 reduced [2Fe-2S]-[ferredoxin] + NADP(+) + H(+) = 2 oxidized [2Fe-2S]-[ferredoxin] + NADPH. The chain is Ferredoxin--NADP reductase from Orientia tsutsugamushi (strain Boryong) (Rickettsia tsutsugamushi).